Consider the following 503-residue polypeptide: Lysine--tRNA ligase (503 aa).

2 residues coordinate Mg(2+): Glu-413 and Glu-420.

This sequence belongs to the class-II aminoacyl-tRNA synthetase family. In terms of assembly, homodimer. It depends on Mg(2+) as a cofactor.

The protein resides in the cytoplasm. The enzyme catalyses tRNA(Lys) + L-lysine + ATP = L-lysyl-tRNA(Lys) + AMP + diphosphate. This Mannheimia succiniciproducens (strain KCTC 0769BP / MBEL55E) protein is Lysine--tRNA ligase.